Consider the following 195-residue polypeptide: 3-isopropylmalate dehydratase small subunit (195 aa).

It belongs to the LeuD family. LeuD type 1 subfamily. Heterodimer of LeuC and LeuD.

The catalysed reaction is (2R,3S)-3-isopropylmalate = (2S)-2-isopropylmalate. Its pathway is amino-acid biosynthesis; L-leucine biosynthesis; L-leucine from 3-methyl-2-oxobutanoate: step 2/4. In terms of biological role, catalyzes the isomerization between 2-isopropylmalate and 3-isopropylmalate, via the formation of 2-isopropylmaleate. The polypeptide is 3-isopropylmalate dehydratase small subunit (Oenococcus oeni (strain ATCC BAA-331 / PSU-1)).